Consider the following 344-residue polypeptide: Protein RecA (344 aa).

ATP is bound at residue 65 to 72 (GPESSGKT).

This sequence belongs to the RecA family.

It localises to the cytoplasm. Can catalyze the hydrolysis of ATP in the presence of single-stranded DNA, the ATP-dependent uptake of single-stranded DNA by duplex DNA, and the ATP-dependent hybridization of homologous single-stranded DNAs. It interacts with LexA causing its activation and leading to its autocatalytic cleavage. The protein is Protein RecA of Campylobacter lari.